The chain runs to 207 residues: Urease accessory protein UreG (207 aa).

14 to 21 (GPVGSGKT) is a binding site for GTP.

The protein belongs to the SIMIBI class G3E GTPase family. UreG subfamily. In terms of assembly, homodimer. UreD, UreF and UreG form a complex that acts as a GTP-hydrolysis-dependent molecular chaperone, activating the urease apoprotein by helping to assemble the nickel containing metallocenter of UreC. The UreE protein probably delivers the nickel.

The protein localises to the cytoplasm. Facilitates the functional incorporation of the urease nickel metallocenter. This process requires GTP hydrolysis, probably effectuated by UreG. This chain is Urease accessory protein UreG, found in Pseudomonas entomophila (strain L48).